An 84-amino-acid polypeptide reads, in one-letter code: MSEKIRTMQGRVISDKMDKSIVVAIERMVKHPIYGKYIKRTTKLHAHDENNECGQGDLVVIRECRPLSKTKSWTLVNIVEKAKA.

This sequence belongs to the universal ribosomal protein uS17 family. Part of the 30S ribosomal subunit.

In terms of biological role, one of the primary rRNA binding proteins, it binds specifically to the 5'-end of 16S ribosomal RNA. The chain is Small ribosomal subunit protein uS17 from Aliivibrio salmonicida (strain LFI1238) (Vibrio salmonicida (strain LFI1238)).